A 417-amino-acid chain; its full sequence is Gamma-glutamyl phosphate reductase (417 aa).

The protein belongs to the gamma-glutamyl phosphate reductase family.

It is found in the cytoplasm. It carries out the reaction L-glutamate 5-semialdehyde + phosphate + NADP(+) = L-glutamyl 5-phosphate + NADPH + H(+). It participates in amino-acid biosynthesis; L-proline biosynthesis; L-glutamate 5-semialdehyde from L-glutamate: step 2/2. Catalyzes the NADPH-dependent reduction of L-glutamate 5-phosphate into L-glutamate 5-semialdehyde and phosphate. The product spontaneously undergoes cyclization to form 1-pyrroline-5-carboxylate. The sequence is that of Gamma-glutamyl phosphate reductase from Escherichia coli O17:K52:H18 (strain UMN026 / ExPEC).